The primary structure comprises 389 residues: 5-hydroxytryptamine receptor 1B (389 aa).

The disordered stretch occupies residues 1–27 (MEETNTHCAPPPPAGSQTGVSQANLSS). The Extracellular portion of the chain corresponds to 1–45 (MEETNTHCAPPPPAGSQTGVSQANLSSAPPNCSTEGYIYQDSIAL). The segment covering 15-27 (GSQTGVSQANLSS) has biased composition (polar residues). 2 N-linked (GlcNAc...) asparagine glycosylation sites follow: N24 and N31. A helical membrane pass occupies residues 46-71 (PWKVLLILVLALFTLATTLSNAFVIA). The Cytoplasmic portion of the chain corresponds to 72–85 (TVYRTRKLHTPANY). The chain crosses the membrane as a helical span at residues 86–110 (LIASLAVTDLLVSILVMPISTMYTV). The Extracellular segment spans residues 111-118 (TGRWTLGQ). The chain crosses the membrane as a helical span at residues 119 to 144 (VVCDFWLSSDITCCTASILHLCVIAL). Residues C121 and C198 are joined by a disulfide bond. Residues D128 and T133 each contribute to the ergotamine site. Residues 145 to 147 (DRY) carry the DRY motif; important for ligand-induced conformation changes and signaling motif. Over 145-164 (DRYWAITDAVEYSAKRTPKR) the chain is Cytoplasmic. A helical membrane pass occupies residues 165–183 (AAVMIALVWVFSISISLPP). Residues 184 to 204 (FFWRQAKAEEEVSDCRVNTDH) lie on the Extracellular side of the membrane. Position 200 (V200) interacts with ergotamine. Residues 205–228 (MLYTVYSTVGAFYFPTLLLIALYG) traverse the membrane as a helical segment. At 229-314 (RIYVEARSRI…AARERKATKT (86 aa)) the chain is on the cytoplasmic side. Polar residues predominate over residues 258-271 (DSPGSTSSVTSVNS). Residues 258–281 (DSPGSTSSVTSVNSRAPDVPSESG) are disordered. Residues 315–336 (LGIILGAFIVCWLPFFIISLVM) form a helical membrane-spanning segment. Over 337–346 (PICKDACWFH) the chain is Extracellular. A helical transmembrane segment spans residues 347 to 369 (LAIFDFFTWLGYLNSLINPIIYT). The short motif at 364–368 (NPIIY) is the NPxxY motif; important for ligand-induced conformation changes and signaling element. Topologically, residues 370–389 (MSNEDFKQAFHKLIRFKCTG) are cytoplasmic. A lipid anchor (S-palmitoyl cysteine) is attached at C387.

The protein belongs to the G-protein coupled receptor 1 family. As to quaternary structure, homodimer. Heterodimer with HTR1D. In terms of processing, phosphorylated. Desensitization of the receptor may be mediated by its phosphorylation. Post-translationally, palmitoylated.

Its subcellular location is the cell membrane. Its function is as follows. G-protein coupled receptor for 5-hydroxytryptamine (serotonin). Also functions as a receptor for ergot alkaloid derivatives, various anxiolytic and antidepressant drugs and other psychoactive substances, such as lysergic acid diethylamide (LSD). Ligand binding causes a conformation change that triggers signaling via guanine nucleotide-binding proteins (G proteins) and modulates the activity of downstream effectors, such as adenylate cyclase. HTR1B is coupled to G(i)/G(o) G alpha proteins and mediates inhibitory neurotransmission by inhibiting adenylate cyclase activity. Arrestin family members inhibit signaling via G proteins and mediate activation of alternative signaling pathways. Regulates the release of 5-hydroxytryptamine, dopamine and acetylcholine in the brain, and thereby affects neural activity, nociceptive processing, pain perception, mood and behavior. Besides, plays a role in vasoconstriction of cerebral arteries. In Felis catus (Cat), this protein is 5-hydroxytryptamine receptor 1B (HTR1B).